The chain runs to 252 residues: uncharacterized protein (252 aa).

The protein belongs to the GSP E family.

This is an uncharacterized protein from Methanocaldococcus jannaschii (strain ATCC 43067 / DSM 2661 / JAL-1 / JCM 10045 / NBRC 100440) (Methanococcus jannaschii).